Here is a 172-residue protein sequence, read N- to C-terminus: Crossover junction endodeoxyribonuclease RuvC (172 aa).

Catalysis depends on residues Asp8, Glu67, and Asp139. Mg(2+) contacts are provided by Asp8, Glu67, and Asp139.

It belongs to the RuvC family. In terms of assembly, homodimer which binds Holliday junction (HJ) DNA. The HJ becomes 2-fold symmetrical on binding to RuvC with unstacked arms; it has a different conformation from HJ DNA in complex with RuvA. In the full resolvosome a probable DNA-RuvA(4)-RuvB(12)-RuvC(2) complex forms which resolves the HJ. Requires Mg(2+) as cofactor.

It localises to the cytoplasm. It catalyses the reaction Endonucleolytic cleavage at a junction such as a reciprocal single-stranded crossover between two homologous DNA duplexes (Holliday junction).. The RuvA-RuvB-RuvC complex processes Holliday junction (HJ) DNA during genetic recombination and DNA repair. Endonuclease that resolves HJ intermediates. Cleaves cruciform DNA by making single-stranded nicks across the HJ at symmetrical positions within the homologous arms, yielding a 5'-phosphate and a 3'-hydroxyl group; requires a central core of homology in the junction. The consensus cleavage sequence is 5'-(A/T)TT(C/G)-3'. Cleavage occurs on the 3'-side of the TT dinucleotide at the point of strand exchange. HJ branch migration catalyzed by RuvA-RuvB allows RuvC to scan DNA until it finds its consensus sequence, where it cleaves and resolves the cruciform DNA. The polypeptide is Crossover junction endodeoxyribonuclease RuvC (Hahella chejuensis (strain KCTC 2396)).